We begin with the raw amino-acid sequence, 59 residues long: UPF0434 protein VS_2060 (59 aa).

The protein belongs to the UPF0434 family.

The polypeptide is UPF0434 protein VS_2060 (Vibrio atlanticus (strain LGP32) (Vibrio splendidus (strain Mel32))).